A 131-amino-acid chain; its full sequence is Synaptobrevin-like protein (131 aa).

At methionine 1 to lysine 81 the chain is on the cytoplasmic side. The 61-residue stretch at arginine 18–lysine 78 folds into the v-SNARE coiled-coil homology domain. Residues methionine 82–valine 102 form a helical; Anchor for type IV membrane protein membrane-spanning segment. Topologically, residues serine 103–glutamine 131 are vesicular. Residues serine 112–glutamine 131 are disordered. Positions aspartate 122–glutamine 131 are enriched in polar residues.

It belongs to the synaptobrevin family.

It is found in the cytoplasmic vesicle. It localises to the secretory vesicle. Its subcellular location is the synaptic vesicle membrane. The protein resides in the synapse. The protein localises to the synaptosome. Unknown, but synaptobrevins are presumed to be involved in targeting and fusion of synaptic vesicles with the presynaptic membrane as well as in neurotransmitter release. In Schistosoma mansoni (Blood fluke), this protein is Synaptobrevin-like protein.